The following is a 729-amino-acid chain: MSKSVVIAEKPSVARDIARVLKCDKKGNGYLEGSKYIVTWALGHLVTLADPESYDVKYKKWNLEDLPMLPERLKLTVIKQTGKQFNAVKSQLLRKDVNEIIVATDAGREGELVARWIIDKVRINKPIKRLWISSVTDKAIKDGFANLKPGRAYDNLYASAVARSEADWYIGLNATRALTTRFNAQLNCGRVQTPTVAMIANREDEIKNFKAQTYYGIEAQTTNQLKLTWQDANGNSRSFNKEKIDGIVKGLDKHNATVMEIDKKQKKSFSPGLYDLTELQRDANKKFGYSAKETLNIMQKLYEQHKVLTYPRTDSRYISSDIVGTLPERLKACGVGEYRPLAHKVLQKPIKANKSFVDDSKVSDHHAIIPTEGYVNFSAFTDKERKIYDLVVKRFLAVLFPAFEYEQLTLRTKVGNETFIARGKTILHAGWKEVYENRFEDDDVTDDVKEQLLPRIEKGDTLTVKLIMQTSGQTKAPARFNEATLLSAMENPTKYMDTQNKQLADTLKSTGGLGTVATRADIIDKLFNSFLIEKRGKDIHITSKGRQLLDLVPEELKSPTLTGEWEQKLEAIAKGKLKKEVFISEMKNYTKEIVSEIKSSDKKYKHDNISTKSCPDCGKPMLEVNGKKGKMLVCQDRECGHRKNVSRTTNARCPQCKKKLELRGEGAGQIFACKCGYREKLSKFQERRKKESGNKADKRDVQKYMKQQKKEEEPLNNPFAEALKKLKFD.

The Toprim domain occupies 3-136 (KSVVIAEKPS…IKRLWISSVT (134 aa)). Positions 9 and 105 each coordinate Mg(2+). The Topo IA-type catalytic domain occupies 153 to 594 (YDNLYASAVA…EMKNYTKEIV (442 aa)). Residues 187-192 (NCGRVQ) form an interaction with DNA region. Y310 (O-(5'-phospho-DNA)-tyrosine intermediate) is an active-site residue. The span at 686–713 (ERRKKESGNKADKRDVQKYMKQQKKEEE) shows a compositional bias: basic and acidic residues. Residues 686-718 (ERRKKESGNKADKRDVQKYMKQQKKEEEPLNNP) are disordered.

This sequence belongs to the type IA topoisomerase family. The cofactor is Mg(2+).

It carries out the reaction ATP-independent breakage of single-stranded DNA, followed by passage and rejoining.. Functionally, releases the supercoiling and torsional tension of DNA, which is introduced during the DNA replication and transcription, by transiently cleaving and rejoining one strand of the DNA duplex. Introduces a single-strand break via transesterification at a target site in duplex DNA. The scissile phosphodiester is attacked by the catalytic tyrosine of the enzyme, resulting in the formation of a DNA-(5'-phosphotyrosyl)-enzyme intermediate and the expulsion of a 3'-OH DNA strand. The free DNA strand then undergoes passage around the unbroken strand, thus removing DNA supercoils. Finally, in the religation step, the DNA 3'-OH attacks the covalent intermediate to expel the active-site tyrosine and restore the DNA phosphodiester backbone. The chain is DNA topoisomerase 3 from Bacillus cereus (strain ATCC 10987 / NRS 248).